The primary structure comprises 450 residues: Dol-P-Glc:Glc(2)Man(9)GlcNAc(2)-PP-Dol alpha-1,2-glucosyltransferase (450 aa).

A helical transmembrane segment spans residues 12–32; that stretch reads ISIISKYVAIVIFLIFVIIMF. Asparagine 34 carries N-linked (GlcNAc...) asparagine glycosylation. A run of 4 helical transmembrane segments spans residues 158-178, 190-210, 243-263, and 273-293; these read YFLFYTDVSSTILIILSLGLI, ALVGFMSLWFRQTNIIWIAFI, LLGYIVNIILFVIFLKLNGGI, and IELHIVQVFYCFTFITFFTIP. N-linked (GlcNAc...) asparagine glycosylation is present at asparagine 297. Helical transmembrane passes span 312–332, 357–377, 384–404, and 429–449; these read IILNLVIGLIIWYIMENFTIV, LKPLILMAYHFSSFQIISSLI, FIGIFSYLIAVGLTLIPSPLF, and FIWLNSINLITSYIFLHKGII.

It belongs to the ALG10 glucosyltransferase family.

It localises to the endoplasmic reticulum membrane. The catalysed reaction is an alpha-D-Glc-(1-&gt;3)-alpha-D-Glc-(1-&gt;3)-alpha-D-Man-(1-&gt;2)-alpha-D-Man-(1-&gt;2)-alpha-D-Man-(1-&gt;3)-[alpha-D-Man-(1-&gt;2)-alpha-D-Man-(1-&gt;3)-[alpha-D-Man-(1-&gt;2)-alpha-D-Man-(1-&gt;6)]-alpha-D-Man-(1-&gt;6)]-beta-D-Man-(1-&gt;4)-beta-D-GlcNAc-(1-&gt;4)-alpha-D-GlcNAc-diphospho-di-trans,poly-cis-dolichol + a di-trans,poly-cis-dolichyl beta-D-glucosyl phosphate = a alpha-D-Glc-(1-&gt;2)-alpha-D-Glc-(1-&gt;3)-alpha-D-Glc-(1-&gt;3)-alpha-D-Man-(1-&gt;2)-alpha-D-Man-(1-&gt;2)-alpha-D-Man-(1-&gt;3)-[alpha-D-Man-(1-&gt;2)-alpha-D-Man-(1-&gt;3)-[alpha-D-Man-(1-&gt;2)-alpha-D-Man-(1-&gt;6)]-alpha-D-Man-(1-&gt;6)]-beta-D-Man-(1-&gt;4)-beta-D-GlcNAc-(1-&gt;4)-alpha-D-GlcNAc-diphospho-di-trans,poly-cis-dolichol + a di-trans,poly-cis-dolichyl phosphate + H(+). It participates in protein modification; protein glycosylation. In terms of biological role, dol-P-Glc:Glc(2)Man(9)GlcNAc(2)-PP-Dol alpha-1,2-glucosyltransferase that operates in the biosynthetic pathway of dolichol-linked oligosaccharides, the glycan precursors employed in protein asparagine (N)-glycosylation. The assembly of dolichol-linked oligosaccharides begins on the cytosolic side of the endoplasmic reticulum membrane and finishes in its lumen. The sequential addition of sugars to dolichol pyrophosphate produces dolichol-linked oligosaccharides containing fourteen sugars, including two GlcNAcs, nine mannoses and three glucoses. Once assembled, the oligosaccharide is transferred from the lipid to nascent proteins by oligosaccharyltransferases. In the lumen of the endoplasmic reticulum, adds the third and last glucose residue from dolichyl phosphate glucose (Dol-P-Glc) onto the lipid-linked oligosaccharide intermediate Glc(2)Man(9)GlcNAc(2)-PP-Dol to produce Glc(3)Man(9)GlcNAc(2)-PP-Dol. The sequence is that of Dol-P-Glc:Glc(2)Man(9)GlcNAc(2)-PP-Dol alpha-1,2-glucosyltransferase (DIE2) from Candida albicans (strain SC5314 / ATCC MYA-2876) (Yeast).